We begin with the raw amino-acid sequence, 117 residues long: Ribosome-binding factor A (117 aa).

It belongs to the RbfA family. Monomer. Binds 30S ribosomal subunits, but not 50S ribosomal subunits or 70S ribosomes.

Its subcellular location is the cytoplasm. One of several proteins that assist in the late maturation steps of the functional core of the 30S ribosomal subunit. Associates with free 30S ribosomal subunits (but not with 30S subunits that are part of 70S ribosomes or polysomes). Required for efficient processing of 16S rRNA. May interact with the 5'-terminal helix region of 16S rRNA. In Bacillus licheniformis (strain ATCC 14580 / DSM 13 / JCM 2505 / CCUG 7422 / NBRC 12200 / NCIMB 9375 / NCTC 10341 / NRRL NRS-1264 / Gibson 46), this protein is Ribosome-binding factor A.